The primary structure comprises 485 residues: Aspartyl/glutamyl-tRNA(Asn/Gln) amidotransferase subunit B (485 aa).

This sequence belongs to the GatB/GatE family. GatB subfamily. Heterotrimer of A, B and C subunits.

It carries out the reaction L-glutamyl-tRNA(Gln) + L-glutamine + ATP + H2O = L-glutaminyl-tRNA(Gln) + L-glutamate + ADP + phosphate + H(+). The enzyme catalyses L-aspartyl-tRNA(Asn) + L-glutamine + ATP + H2O = L-asparaginyl-tRNA(Asn) + L-glutamate + ADP + phosphate + 2 H(+). Its function is as follows. Allows the formation of correctly charged Asn-tRNA(Asn) or Gln-tRNA(Gln) through the transamidation of misacylated Asp-tRNA(Asn) or Glu-tRNA(Gln) in organisms which lack either or both of asparaginyl-tRNA or glutaminyl-tRNA synthetases. The reaction takes place in the presence of glutamine and ATP through an activated phospho-Asp-tRNA(Asn) or phospho-Glu-tRNA(Gln). The protein is Aspartyl/glutamyl-tRNA(Asn/Gln) amidotransferase subunit B of Borrelia recurrentis (strain A1).